Reading from the N-terminus, the 386-residue chain is 3-ketoacyl-CoA thiolase (386 aa).

The Acyl-thioester intermediate role is filled by cysteine 91. Residues histidine 342 and cysteine 372 each act as proton acceptor in the active site.

It belongs to the thiolase-like superfamily. Thiolase family. Heterotetramer of two alpha chains (FadB) and two beta chains (FadA).

It localises to the cytoplasm. It carries out the reaction an acyl-CoA + acetyl-CoA = a 3-oxoacyl-CoA + CoA. It participates in lipid metabolism; fatty acid beta-oxidation. Its function is as follows. Catalyzes the final step of fatty acid oxidation in which acetyl-CoA is released and the CoA ester of a fatty acid two carbons shorter is formed. The chain is 3-ketoacyl-CoA thiolase from Colwellia psychrerythraea (strain 34H / ATCC BAA-681) (Vibrio psychroerythus).